A 357-amino-acid polypeptide reads, in one-letter code: Inositol-tetrakisphosphate 1-kinase 3 (357 aa).

1D-myo-inositol 1,3,4-trisphosphate is bound by residues Lys-56 and Lys-98. Residues Arg-133 and Lys-183 each coordinate ATP. 2 residues coordinate 1D-myo-inositol 1,3,4-trisphosphate: His-190 and Lys-222. Residues Gln-211 to Lys-222, Ser-237, and Ser-262 each bind ATP. Positions 302, 317, and 319 each coordinate Mg(2+). Position 319 (Asn-319) interacts with 1D-myo-inositol 1,3,4-trisphosphate.

This sequence belongs to the ITPK1 family. As to quaternary structure, monomer. Mg(2+) is required as a cofactor. As to expression, expressed in roots, leaves, flowers, anthers and embryos.

The catalysed reaction is 1D-myo-inositol 3,4,5,6-tetrakisphosphate + ATP = 1D-myo-inositol 1,3,4,5,6-pentakisphosphate + ADP + H(+). The enzyme catalyses 1D-myo-inositol 1,3,4-trisphosphate + ATP = 1D-myo-inositol 1,3,4,5-tetrakisphosphate + ADP + H(+). It catalyses the reaction 1D-myo-inositol 1,3,4-trisphosphate + ATP = 1D-myo-inositol 1,3,4,6-tetrakisphosphate + ADP + H(+). Kinase that can phosphorylate various inositol polyphosphate such as Ins(3,4,5,6)P4 or Ins(1,3,4)P3 and participates in phytic acid biosynthesis in developing seeds. Phytic acid is the primary storage form of phosphorus in cereal grains and other plant seeds. In Oryza sativa subsp. japonica (Rice), this protein is Inositol-tetrakisphosphate 1-kinase 3.